The primary structure comprises 233 residues: Lipoprotein-releasing system ATP-binding protein LolD (233 aa).

The 227-residue stretch at 7-233 folds into the ABC transporter domain; that stretch reads IHCEKLSKTY…QLQSESERNH (227 aa). Position 43-50 (43-50) interacts with ATP; that stretch reads GASGAGKS.

The protein belongs to the ABC transporter superfamily. Lipoprotein translocase (TC 3.A.1.125) family. As to quaternary structure, the complex is composed of two ATP-binding proteins (LolD) and two transmembrane proteins (LolC and LolE).

It is found in the cell inner membrane. Its function is as follows. Part of the ABC transporter complex LolCDE involved in the translocation of mature outer membrane-directed lipoproteins, from the inner membrane to the periplasmic chaperone, LolA. Responsible for the formation of the LolA-lipoprotein complex in an ATP-dependent manner. The polypeptide is Lipoprotein-releasing system ATP-binding protein LolD (Coxiella burnetii (strain RSA 493 / Nine Mile phase I)).